The primary structure comprises 549 residues: MFS-type transporter TwmF (549 aa).

Transmembrane regions (helical) follow at residues 29 to 49, 63 to 83, 99 to 119, and 126 to 146; these read IVIG…VLTI, NFIW…PLFG, VAIF…AMLI, and GVGS…LVPL. Residue N151 is glycosylated (N-linked (GlcNAc...) asparagine). 10 consecutive transmembrane segments (helical) span residues 155 to 175, 182 to 202, 221 to 241, 249 to 269, 291 to 311, 328 to 348, 355 to 375, 390 to 410, 421 to 441, and 502 to 522; these read ILMS…GAIV, WVFY…FIFL, LVGN…LSYA, SWHT…FAGL, IILA…LFFL, VALL…AIAL, KPVH…FTLF, IVAF…QAFI, AWYF…AAIF, and VSIA…DVGL.

Belongs to the major facilitator superfamily.

It is found in the membrane. Functionally, MFS efflux transporter; part of the gene cluster that mediates the biosynthesis of wortmanamides A and B, reduced long-chain polyketides amidated with a specific omega-amino acid, 5-aminopentanoic acid (5PA). In Talaromyces wortmannii (Penicillium wortmannii), this protein is MFS-type transporter TwmF.